Here is a 157-residue protein sequence, read N- to C-terminus: D-aminoacyl-tRNA deacylase (157 aa).

The Gly-cisPro motif, important for rejection of L-amino acids signature appears at Gly-137 to Pro-138.

Belongs to the DTD family. As to quaternary structure, homodimer.

The protein localises to the cytoplasm. It catalyses the reaction glycyl-tRNA(Ala) + H2O = tRNA(Ala) + glycine + H(+). The enzyme catalyses a D-aminoacyl-tRNA + H2O = a tRNA + a D-alpha-amino acid + H(+). Functionally, an aminoacyl-tRNA editing enzyme that deacylates mischarged D-aminoacyl-tRNAs. Also deacylates mischarged glycyl-tRNA(Ala), protecting cells against glycine mischarging by AlaRS. Acts via tRNA-based rather than protein-based catalysis; rejects L-amino acids rather than detecting D-amino acids in the active site. By recycling D-aminoacyl-tRNA to D-amino acids and free tRNA molecules, this enzyme counteracts the toxicity associated with the formation of D-aminoacyl-tRNA entities in vivo and helps enforce protein L-homochirality. The chain is D-aminoacyl-tRNA deacylase from Cyanothece sp. (strain PCC 7425 / ATCC 29141).